A 159-amino-acid chain; its full sequence is UPF0262 protein CCNA_02430 (159 aa).

The protein belongs to the UPF0262 family.

This Caulobacter vibrioides (strain NA1000 / CB15N) (Caulobacter crescentus) protein is UPF0262 protein CCNA_02430.